A 136-amino-acid chain; its full sequence is Ribosome-binding factor A (136 aa).

Belongs to the RbfA family. Monomer. Binds 30S ribosomal subunits, but not 50S ribosomal subunits or 70S ribosomes.

The protein localises to the cytoplasm. Its function is as follows. One of several proteins that assist in the late maturation steps of the functional core of the 30S ribosomal subunit. Associates with free 30S ribosomal subunits (but not with 30S subunits that are part of 70S ribosomes or polysomes). Required for efficient processing of 16S rRNA. May interact with the 5'-terminal helix region of 16S rRNA. The polypeptide is Ribosome-binding factor A (Serratia proteamaculans (strain 568)).